A 347-amino-acid chain; its full sequence is Protein RecA (347 aa).

Residue 66–73 (GPESSGKT) coordinates ATP.

Belongs to the RecA family.

The protein localises to the cytoplasm. In terms of biological role, can catalyze the hydrolysis of ATP in the presence of single-stranded DNA, the ATP-dependent uptake of single-stranded DNA by duplex DNA, and the ATP-dependent hybridization of homologous single-stranded DNAs. It interacts with LexA causing its activation and leading to its autocatalytic cleavage. The protein is Protein RecA of Methylococcus capsulatus (strain ATCC 33009 / NCIMB 11132 / Bath).